Consider the following 638-residue polypeptide: Sodium- and chloride-dependent neutral and basic amino acid transporter B(0+) (638 aa).

Topologically, residues M1–D44 are cytoplasmic. Transmembrane regions (helical) follow at residues Y45–L65, G72–L92, and I110–I130. Over Y131–V230 the chain is Extracellular. N155, N163, N174, N185, N193, and N198 each carry an N-linked (GlcNAc...) asparagine glycan. A run of 2 helical transmembrane segments spans residues V231–F251 and S257–I277. N-linked (GlcNAc...) asparagine glycosylation occurs at N298. 7 helical membrane passes run A311 to S331, I344 to I364, L395 to L415, I453 to I473, F476 to I496, C524 to F544, and V559 to I579. The Cytoplasmic portion of the chain corresponds to K580–E638. Residues A618–I628 are compositionally biased toward basic and acidic residues. The tract at residues A618–E638 is disordered.

It belongs to the sodium:neurotransmitter symporter (SNF) (TC 2.A.22) family. SLC6A14 subfamily. In terms of tissue distribution, expressed in the distal region of the intestinal tract: cecum and colon.

The protein resides in the membrane. Its subcellular location is the apical cell membrane. The enzyme catalyses glycine(out) + chloride(out) + 2 Na(+)(out) = glycine(in) + chloride(in) + 2 Na(+)(in). It carries out the reaction L-leucine(out) + chloride(out) + 2 Na(+)(out) = L-leucine(in) + chloride(in) + 2 Na(+)(in). It catalyses the reaction L-glutamine(out) + chloride(out) + 2 Na(+)(out) = L-glutamine(in) + chloride(in) + 2 Na(+)(in). The catalysed reaction is L-arginine(out) + chloride(out) + 2 Na(+)(out) = L-arginine(in) + chloride(in) + 2 Na(+)(in). The enzyme catalyses (R)-carnitine(out) + chloride(out) + 2 Na(+)(out) = (R)-carnitine(in) + chloride(in) + 2 Na(+)(in). It carries out the reaction O-propanoyl-(R)-carnitine(out) + chloride(out) + 2 Na(+)(out) = O-propanoyl-(R)-carnitine(in) + chloride(in) + 2 Na(+)(in). It catalyses the reaction L-isoleucine(out) + chloride(out) + 2 Na(+)(out) = L-isoleucine(in) + chloride(in) + 2 Na(+)(in). The catalysed reaction is L-methionine(out) + chloride(out) + 2 Na(+)(out) = L-methionine(in) + chloride(in) + 2 Na(+)(in). The enzyme catalyses L-valine(out) + chloride(out) + 2 Na(+)(out) = L-valine(in) + chloride(in) + 2 Na(+)(in). It carries out the reaction L-alanine(out) + chloride(out) + 2 Na(+)(out) = L-alanine(in) + chloride(in) + 2 Na(+)(in). It catalyses the reaction L-serine(out) + chloride(out) + 2 Na(+)(out) = L-serine(in) + chloride(in) + 2 Na(+)(in). The catalysed reaction is L-cysteine(out) + chloride(out) + 2 Na(+)(out) = L-cysteine(in) + chloride(in) + 2 Na(+)(in). The enzyme catalyses L-asparagine(out) + chloride(out) + 2 Na(+)(out) = L-asparagine(in) + chloride(in) + 2 Na(+)(in). It carries out the reaction L-threonine(out) + chloride(out) + 2 Na(+)(out) = L-threonine(in) + chloride(in) + 2 Na(+)(in). It catalyses the reaction L-phenylalanine(out) + chloride(out) + 2 Na(+)(out) = L-phenylalanine(in) + chloride(in) + 2 Na(+)(in). The catalysed reaction is L-tryptophan(out) + chloride(out) + 2 Na(+)(out) = L-tryptophan(in) + chloride(in) + 2 Na(+)(in). The enzyme catalyses L-tyrosine(out) + chloride(out) + 2 Na(+)(out) = L-tyrosine(in) + chloride(in) + 2 Na(+)(in). It carries out the reaction L-histidine(out) + chloride(out) + 2 Na(+)(out) = L-histidine(in) + chloride(in) + 2 Na(+)(in). It catalyses the reaction L-lysine(out) + chloride(out) + 2 Na(+)(out) = L-lysine(in) + chloride(in) + 2 Na(+)(in). The catalysed reaction is O-butanoyl-(R)-carnitine(out) + chloride(out) + 2 Na(+)(out) = O-butanoyl-(R)-carnitine(in) + chloride(in) + 2 Na(+)(in). Its function is as follows. Amino acid transporter that plays an important role in the absorption of amino acids in the intestinal tract. Mediates the uptake of a broad range of neutral and cationic amino acids (with the exception of proline) in a Na(+)/Cl(-)-dependent manner. Transports non-alpha-amino acids such as beta-alanine with low affinity, and has a higher affinity for dipolar and cationic amino acids such as leucine and lysine. Can also transport carnitine, butyrylcarnitine and propionylcarnitine coupled to the transmembrane gradients of Na(+) and Cl(-). The protein is Sodium- and chloride-dependent neutral and basic amino acid transporter B(0+) of Mus musculus (Mouse).